A 42-amino-acid chain; its full sequence is DDTPSSRCGSGGWGPCLPIVDLLCIVHVTVGCSGGFGCCRIG.

Cystine bridges form between Cys-8–Cys-38, Cys-16–Cys-32, and Cys-24–Cys-39.

The protein localises to the secreted. The protein resides in the extracellular space. It localises to the extracellular matrix. Functionally, induces the nucleation and stabilization of vaterite, one of the crystalline polymorphs of calcium carbonate. Exhibits strong antimicrobial activity against Pseudomonas aeruginosa and Proteus vulgaris. This is Pelovaterin from Pelodiscus sinensis (Chinese softshell turtle).